We begin with the raw amino-acid sequence, 625 residues long: Chaperone protein HtpG (625 aa).

Positions 1-332 (MSNKQNTAVQ…TEDLSLNVSR (332 aa)) are a; substrate-binding. Residues 333–545 (EIVQSSPVMS…KDAMDSQMER (213 aa)) are b. The segment at 546-625 (MMKMMQQEMP…ELIEAATLSR (80 aa)) is c.

Belongs to the heat shock protein 90 family. In terms of assembly, homodimer.

Its subcellular location is the cytoplasm. Functionally, molecular chaperone. Has ATPase activity. The polypeptide is Chaperone protein HtpG (Chlorobium luteolum (strain DSM 273 / BCRC 81028 / 2530) (Pelodictyon luteolum)).